Here is a 20-residue protein sequence, read N- to C-terminus: Brevinin-1SPd (20 aa).

Cysteines 14 and 20 form a disulfide.

Expressed by the skin glands.

The protein localises to the secreted. Its function is as follows. Antimicrobial peptide with activity against Gram-negative and Gram-positive bacteria (MIC=13 uM against E.coli, MIC=3 uM against S.aureus) and fungi (MIC=3 uM against C.albicans). Shows hemolytic activity on human erythrocytes (HC(50)=8 uM). This is Brevinin-1SPd from Lithobates septentrionalis (Mink frog).